We begin with the raw amino-acid sequence, 447 residues long: Elongation factor 1-alpha (447 aa).

The tr-type G domain maps to 5 to 230; sequence KIHISIVVIG…DQINEPKRPS (226 aa). Residues 14 to 21 are G1; that stretch reads GHVDSGKS. Position 14 to 21 (14 to 21) interacts with GTP; the sequence is GHVDSGKS. An N6,N6-dimethyllysine modification is found at Lys55. The tract at residues 70–74 is G2; the sequence is GITID. Lys79 carries the post-translational modification N6,N6,N6-trimethyllysine. The interval 91–94 is G3; that stretch reads DAPG. GTP-binding positions include 91–95 and 153–156; these read DAPGH and NKMD. Residues 153-156 are G4; the sequence is NKMD. Position 187 is an N6,N6,N6-trimethyllysine (Lys187). A G5 region spans residues 194-196; that stretch reads SGF. Position 261 is an N6-methyllysine (Lys261). Glu289 carries the post-translational modification 5-glutamyl glycerylphosphorylethanolamine. Lys306 is subject to N6,N6,N6-trimethyllysine. Position 362 is a 5-glutamyl glycerylphosphorylethanolamine (Glu362). Position 396 is an N6,N6,N6-trimethyllysine (Lys396).

The protein belongs to the TRAFAC class translation factor GTPase superfamily. Classic translation factor GTPase family. EF-Tu/EF-1A subfamily.

The protein resides in the cytoplasm. This protein promotes the GTP-dependent binding of aminoacyl-tRNA to the A-site of ribosomes during protein biosynthesis. The chain is Elongation factor 1-alpha (BLT63) from Hordeum vulgare (Barley).